We begin with the raw amino-acid sequence, 278 residues long: Putative carbamate hydrolase RutD (278 aa).

It belongs to the AB hydrolase superfamily. Hydrolase RutD family.

It catalyses the reaction carbamate + 2 H(+) = NH4(+) + CO2. Involved in pyrimidine catabolism. May facilitate the hydrolysis of carbamate, a reaction that can also occur spontaneously. The sequence is that of Putative carbamate hydrolase RutD from Yersinia enterocolitica serotype O:8 / biotype 1B (strain NCTC 13174 / 8081).